Here is a 172-residue protein sequence, read N- to C-terminus: MSRQHAYSREELLATARGELFSHSNARLPNDPMLMFDRITEIYADGGSHGKGIVNAELDIRPDLWFFGCHFLGDPVMPGCLGLDAMWQLTGFFLTWSGATPGYGRALGCGEVKFTGQVLPNAKLVRYEIEMTKIINRTLVIGQANARMLVDNREIYFAKDLRVGMFNSTESF.

Histidine 70 is a catalytic residue.

The protein belongs to the thioester dehydratase family. FabA subfamily. Homodimer.

It localises to the cytoplasm. It carries out the reaction a (3R)-hydroxyacyl-[ACP] = a (2E)-enoyl-[ACP] + H2O. It catalyses the reaction (3R)-hydroxydecanoyl-[ACP] = (2E)-decenoyl-[ACP] + H2O. The enzyme catalyses (2E)-decenoyl-[ACP] = (3Z)-decenoyl-[ACP]. The protein operates within lipid metabolism; fatty acid biosynthesis. Its function is as follows. Necessary for the introduction of cis unsaturation into fatty acids. Catalyzes the dehydration of (3R)-3-hydroxydecanoyl-ACP to E-(2)-decenoyl-ACP and then its isomerization to Z-(3)-decenoyl-ACP. Can catalyze the dehydratase reaction for beta-hydroxyacyl-ACPs with saturated chain lengths up to 16:0, being most active on intermediate chain length. This is 3-hydroxydecanoyl-[acyl-carrier-protein] dehydratase (fabA) from Xylella fastidiosa (strain 9a5c).